The primary structure comprises 349 residues: Beta-hexosaminidase (349 aa).

Substrate-binding positions include aspartate 64, arginine 72, arginine 138, and 168-169; that span reads KH. Histidine 181 serves as the catalytic Proton donor/acceptor. The active-site Nucleophile is the aspartate 252.

The protein belongs to the glycosyl hydrolase 3 family. NagZ subfamily.

It localises to the cytoplasm. It carries out the reaction Hydrolysis of terminal non-reducing N-acetyl-D-hexosamine residues in N-acetyl-beta-D-hexosaminides.. The protein operates within cell wall biogenesis; peptidoglycan recycling. Its function is as follows. Plays a role in peptidoglycan recycling by cleaving the terminal beta-1,4-linked N-acetylglucosamine (GlcNAc) from peptide-linked peptidoglycan fragments, giving rise to free GlcNAc, anhydro-N-acetylmuramic acid and anhydro-N-acetylmuramic acid-linked peptides. The sequence is that of Beta-hexosaminidase from Methylobacillus flagellatus (strain ATCC 51484 / DSM 6875 / VKM B-1610 / KT).